A 289-amino-acid chain; its full sequence is Diaminopimelate epimerase (289 aa).

The substrate site is built by asparagine 11 and asparagine 78. The active-site Proton donor is cysteine 87. Residues 88–89, asparagine 163, asparagine 199, and 217–218 contribute to the substrate site; these read GN and ER. Cysteine 226 acts as the Proton acceptor in catalysis. Residue 227-228 participates in substrate binding; sequence GT.

It belongs to the diaminopimelate epimerase family. Homodimer.

Its subcellular location is the cytoplasm. It catalyses the reaction (2S,6S)-2,6-diaminopimelate = meso-2,6-diaminopimelate. It participates in amino-acid biosynthesis; L-lysine biosynthesis via DAP pathway; DL-2,6-diaminopimelate from LL-2,6-diaminopimelate: step 1/1. Its function is as follows. Catalyzes the stereoinversion of LL-2,6-diaminopimelate (L,L-DAP) to meso-diaminopimelate (meso-DAP), a precursor of L-lysine and an essential component of the bacterial peptidoglycan. The sequence is that of Diaminopimelate epimerase from Mycolicibacterium gilvum (strain PYR-GCK) (Mycobacterium gilvum (strain PYR-GCK)).